We begin with the raw amino-acid sequence, 550 residues long: Hydroxylamine reductase (550 aa).

Cysteine 3, cysteine 6, cysteine 18, and cysteine 25 together coordinate [2Fe-2S] cluster. Hybrid [4Fe-2O-2S] cluster is bound by residues histidine 249, glutamate 273, cysteine 317, cysteine 405, cysteine 433, cysteine 458, glutamate 492, and lysine 494. Cysteine 405 carries the post-translational modification Cysteine persulfide.

This sequence belongs to the HCP family. It depends on [2Fe-2S] cluster as a cofactor. The cofactor is hybrid [4Fe-2O-2S] cluster.

The protein resides in the cytoplasm. It catalyses the reaction A + NH4(+) + H2O = hydroxylamine + AH2 + H(+). Functionally, catalyzes the reduction of hydroxylamine to form NH(3) and H(2)O. The chain is Hydroxylamine reductase from Salmonella gallinarum (strain 287/91 / NCTC 13346).